The chain runs to 981 residues: MAADSEPESEVFEITDFTTASEWERFISKVEEVLNDWKLIGPSLGKPLEKGIFTSGTWEERSDEISFADFRFSVTHHYLVQESPDKERKDEELEDAIPQSMQDLLCMNNDFPPRAHCLVRWYGLREFVVIAPAAHSDAVLSESKCNLLLSSISIALGNTGCQVPLFVQIHHKWRRMYMGECQGPGVRTDFEMVHLRKVPSQYTHLSGLLDIFKSKIGCPLTPLPPVSIAIRLTYVLQDWQQYFWPQQPPDIDALVGGEVGGLEFGKLPFGACEDPISELHLATTWPHLTEGIIVDNDVYSDLDPVQAPHWSVRVRKADNPQCLLGDFVTEFLKICRRKESTDEILGRSTFEEEGREVADITHALSKLTEPAPVPIHKLSVSNMVHTAKKKIRKHRGEESPLNSDVLNTILLFLFPDAVSEKPLDGTTSIDNSIPAPEAGDYTLYNQFKSAPSDSLTYKLALCLCMINFYHGGLKGVAHLWQEFVLEMRFRWENNFLIPGLASGSPDLRCCLLHQKLQMLNCCIERKKARDEGKKTSLSDSTTSAYPGDAGKTGGQLGLDHLRDTEKEKGEVGKSWDSWSDSEEEFFECLSDTEDLKGNGQESGKKGGPKEMANLKPEGRLHQHGKLTLLHNGEPLYIPVTQEPAPMTEDLLEEQSEVLAKLGTSAEGAHLRARMQSACLLSDMESFKAANPGCFLEDFVRWYSPRDYIEEEVTDEKGNVVLKGELSARMKIPSNMWVEAWETAKPVPARRQRRLFDDTREAEKVLHYLAMQKPADLARHLLPCVIHAAVLKVKEEESLENIPSVKKIIKQIIAHSSKVLHFPNPEDKKLEEIILQITTVEAIIARARSLKAKFGTEKCEHEEEKEGLERFVSCLLEQPEVSVTGAGRGHAGRIIHKLFVNAQRAAAVALPEEELKKSGCPEERRQTLVSDFPPPAGRELILRATVPRPAPYSKALPQRMYSVLTKEDFRLAGAFSSDTSFF.

6 positions are modified to phosphoserine: S83, S379, S536, S579, S581, and S590. Residues 532–558 (GKKTSLSDSTTSAYPGDAGKTGGQLGL) form a disordered region. The interval 591 to 614 (DTEDLKGNGQESGKKGGPKEMANL) is disordered. S664 is subject to Phosphoserine.

This sequence belongs to the Rab3-GAP catalytic subunit family. As to quaternary structure, the Rab3 GTPase-activating complex is a heterodimer composed of Rab3gap1 and Rab3gap2. The Rab3 GTPase-activating complex interacts with DMXL2. Interacts with LMAN1. In the eye, it is highly expressed within the lens, particularly in the anterior lens epithelium and in a ring corresponding to the equatorial region where anterior cells are differentiating into lens fibers. Also highly expressed in the retina.

The protein resides in the cytoplasm. Its subcellular location is the endoplasmic reticulum. The protein localises to the golgi apparatus. It is found in the cis-Golgi network. Its function is as follows. Catalytic subunit of the Rab3 GTPase-activating (Rab3GAP) complex composed of RAB3GAP1 and RAB3GAP2, which has GTPase-activating protein (GAP) activity towards various Rab3 subfamily members (RAB3A, RAB3B, RAB3C and RAB3D), RAB5A and RAB43, and guanine nucleotide exchange factor (GEF) activity towards RAB18. As part of the Rab3GAP complex, acts as a GAP for Rab3 proteins by converting active RAB3-GTP to the inactive form RAB3-GDP. Rab3 proteins are involved in regulated exocytosis of neurotransmitters and hormones. The Rab3GAP complex, acts as a GEF for RAB18 by promoting the conversion of inactive RAB18-GDP to the active form RAB18-GTP. Recruits and stabilizes RAB18 at the cis-Golgi membrane where RAB18 is most likely activated. Also involved in RAB18 recruitment at the endoplasmic reticulum (ER) membrane where it maintains proper ER structure. Required for normal eye and brain development. May participate in neurodevelopmental processes such as proliferation, migration and differentiation before synapse formation, and non-synaptic vesicular release of neurotransmitters. This chain is Rab3 GTPase-activating protein catalytic subunit, found in Mus musculus (Mouse).